Consider the following 374-residue polypeptide: Eukaryotic translation initiation factor 3 subunit M (374 aa).

At Ser-2 the chain carries N-acetylserine. 2 positions are modified to phosphoserine: Ser-2 and Ser-152. The PCI domain occupies 180–339 (AASKVMVELL…RKVVVSHSTH (160 aa)). Lys-254 carries the post-translational modification N6-acetyllysine. At Ser-367 the chain carries Phosphoserine.

This sequence belongs to the eIF-3 subunit M family. Component of the eukaryotic translation initiation factor 3 (eIF-3) complex, which is composed of 13 subunits: EIF3A, EIF3B, EIF3C, EIF3D, EIF3E, EIF3F, EIF3G, EIF3H, EIF3I, EIF3J, EIF3K, EIF3L and EIF3M. The eIF-3 complex appears to include 3 stable modules: module A is composed of EIF3A, EIF3B, EIF3G and EIF3I; module B is composed of EIF3F, EIF3H, and EIF3M; and module C is composed of EIF3C, EIF3D, EIF3E, EIF3K and EIF3L. EIF3C of module C binds EIF3B of module A and EIF3H of module B, thereby linking the three modules. EIF3J is a labile subunit that binds to the eIF-3 complex via EIF3B. The eIF-3 complex interacts with RPS6KB1 under conditions of nutrient depletion. Mitogenic stimulation leads to binding and activation of a complex composed of MTOR and RPTOR, leading to phosphorylation and release of RPS6KB1 and binding of EIF4B to eIF-3.

The protein localises to the cytoplasm. In terms of biological role, component of the eukaryotic translation initiation factor 3 (eIF-3) complex, which is required for several steps in the initiation of protein synthesis. The eIF-3 complex associates with the 40S ribosome and facilitates the recruitment of eIF-1, eIF-1A, eIF-2:GTP:methionyl-tRNAi and eIF-5 to form the 43S pre-initiation complex (43S PIC). The eIF-3 complex stimulates mRNA recruitment to the 43S PIC and scanning of the mRNA for AUG recognition. The eIF-3 complex is also required for disassembly and recycling of post-termination ribosomal complexes and subsequently prevents premature joining of the 40S and 60S ribosomal subunits prior to initiation. The eIF-3 complex specifically targets and initiates translation of a subset of mRNAs involved in cell proliferation, including cell cycling, differentiation and apoptosis, and uses different modes of RNA stem-loop binding to exert either translational activation or repression. The protein is Eukaryotic translation initiation factor 3 subunit M of Pongo abelii (Sumatran orangutan).